The sequence spans 1470 residues: Actin cytoskeleton-regulatory complex protein pan1 (1470 aa).

The segment at M1–I157 is disordered. The segment covering Q25 to P48 has biased composition (low complexity). Over residues Q54–F75 the composition is skewed to polar residues. Positions G77–Q101 are enriched in low complexity. Positions R129 to S139 are enriched in polar residues. Positions D169–M257 constitute an EH 1 domain. The EF-hand 1 domain maps to L201 to R236. Disordered stretches follow at residues D282–N305 and Q343–P377. Positions P292–Q301 are enriched in pro residues. Low complexity predominate over residues P348–P360. In terms of domain architecture, EH 2 spans E458–N547. Residues L491–K526 form the EF-hand 2 domain. 4 disordered regions span residues G614 to E641, E794 to R864, G886 to K1087, and E1099 to D1470. Low complexity predominate over residues A627 to A637. Residues A633–H758 adopt a coiled-coil conformation. 2 stretches are compositionally biased toward basic and acidic residues: residues A809–R864 and V892–P910. Low complexity predominate over residues L917–S932. Basic and acidic residues-rich tracts occupy residues T933–E951, R971–R1006, A1052–K1087, E1099–A1127, and A1134–L1146. A coiled-coil region spans residues D963–S1159. Residues E1151–G1163 are compositionally biased toward acidic residues. Polar residues predominate over residues P1169 to L1180. Over residues P1181–E1195 the composition is skewed to low complexity. The span at P1243–P1269 shows a compositional bias: polar residues. Residues L1277–E1286 show a composition bias toward basic and acidic residues. The segment covering S1340–T1352 has biased composition (polar residues). 2 stretches are compositionally biased toward pro residues: residues A1367–A1380 and A1389–A1433. Positions D1437 to V1454 constitute a WH2 domain. Over residues N1457–D1470 the composition is skewed to polar residues.

It belongs to the PAN1 family. Component of the PAN1 actin cytoskeleton-regulatory complex.

The protein resides in the cell membrane. It localises to the endosome membrane. Its subcellular location is the cytoplasm. It is found in the cytoskeleton. The protein localises to the actin patch. Component of the PAN1 actin cytoskeleton-regulatory complex required for the internalization of endosomes during actin-coupled endocytosis. The complex links the site of endocytosis to the cell membrane-associated actin cytoskeleton. Mediates uptake of external molecules and vacuolar degradation of plasma membrane proteins. Plays a role in the proper organization of the cell membrane-associated actin cytoskeleton and promotes its destabilization. The chain is Actin cytoskeleton-regulatory complex protein pan1 (pan1) from Neosartorya fischeri (strain ATCC 1020 / DSM 3700 / CBS 544.65 / FGSC A1164 / JCM 1740 / NRRL 181 / WB 181) (Aspergillus fischerianus).